A 373-amino-acid polypeptide reads, in one-letter code: Partitioning protein REP1 (373 aa).

The interaction with REP2 stretch occupies residues 1–76; the sequence is MNGERLLACI…EKELDWPDPA (76 aa). Residues 1 to 129 form an interaction with REP2 and self-association region; sequence MNGERLLACI…LNRRGKGIRR (129 aa). The nuclear localization stretch occupies residues 349–373; it reads FEEHWKPVDVEVEFRCKFKERKVDG.

In terms of assembly, interacts with REP2.

The protein localises to the nucleus. Part of the plasmid partitioning system, which ensures the equal distribution of replicated plasmid molecules to daughter cells. The plasmids exist as well-organized plasmid foci within the nucleus that stay together throughout the cell-cycle and act as entity during segregation, effetively reducing copy number to one. Plasmid partitioning requires the proteins REP1, REP2, and a cis-acting locus STB (REP3). REP1-REP2 stably associate with CSE4-containing chromatin at STB during S-phase, marking the locus with a centromeric tag, and thereby probably catching mitotic spindle microtubules to the plasmid cluster and coupling plasmid segregation to chromosome segregation. REP1-REP2 are required to recruit the cohesin complex to the STB locus for pairing of the replicated plasmid cluster, a prerequisite for successful plasmid segregation. REP1-REP2 also negatively regulate expression of site-specific recombinase FLP and of RAF1. The sequence is that of Partitioning protein REP1 (REP1) from Saccharomyces cerevisiae (strain ATCC 204508 / S288c) (Baker's yeast).